A 147-amino-acid polypeptide reads, in one-letter code: Large ribosomal subunit protein uL13 (147 aa).

It belongs to the universal ribosomal protein uL13 family. In terms of assembly, part of the 50S ribosomal subunit.

Functionally, this protein is one of the early assembly proteins of the 50S ribosomal subunit, although it is not seen to bind rRNA by itself. It is important during the early stages of 50S assembly. The polypeptide is Large ribosomal subunit protein uL13 (Pediococcus pentosaceus (strain ATCC 25745 / CCUG 21536 / LMG 10740 / 183-1w)).